The sequence spans 473 residues: Photosystem II CP43 reaction center protein (473 aa).

A propeptide spanning residues 1 to 14 is cleaved from the precursor; that stretch reads MKTLYSLRRFYPVE. T15 carries the N-acetylthreonine modification. Position 15 is a phosphothreonine (T15). Helical transmembrane passes span 69–93, 134–155, 178–200, 255–275, and 291–312; these read LFEV…PHLA, LLGP…KDRN, KALY…RKIT, KPFA…LSYS, and WFNN…ASQA. Position 367 (E367) interacts with [CaMn4O5] cluster. The helical transmembrane segment at 447–471 threads the bilayer; that stretch reads RARAAAAGFEKGIDRDFEPVLSMTP.

This sequence belongs to the PsbB/PsbC family. PsbC subfamily. As to quaternary structure, PSII is composed of 1 copy each of membrane proteins PsbA, PsbB, PsbC, PsbD, PsbE, PsbF, PsbH, PsbI, PsbJ, PsbK, PsbL, PsbM, PsbT, PsbX, PsbY, PsbZ, Psb30/Ycf12, at least 3 peripheral proteins of the oxygen-evolving complex and a large number of cofactors. It forms dimeric complexes. Binds multiple chlorophylls and provides some of the ligands for the Ca-4Mn-5O cluster of the oxygen-evolving complex. It may also provide a ligand for a Cl- that is required for oxygen evolution. PSII binds additional chlorophylls, carotenoids and specific lipids. serves as cofactor.

It is found in the plastid. The protein resides in the chloroplast thylakoid membrane. Its function is as follows. One of the components of the core complex of photosystem II (PSII). It binds chlorophyll and helps catalyze the primary light-induced photochemical processes of PSII. PSII is a light-driven water:plastoquinone oxidoreductase, using light energy to abstract electrons from H(2)O, generating O(2) and a proton gradient subsequently used for ATP formation. The polypeptide is Photosystem II CP43 reaction center protein (Daucus carota (Wild carrot)).